An 86-amino-acid polypeptide reads, in one-letter code: UPF0335 protein BruAb1_1737 (86 aa).

This sequence belongs to the UPF0335 family.

This is UPF0335 protein BruAb1_1737 from Brucella abortus biovar 1 (strain 9-941).